The chain runs to 206 residues: Probable N-acetyltransferase 14 (206 aa).

The 152-residue stretch at 55-206 folds into the N-acetyltransferase domain; sequence LRFVLASFAL…TLVREFSKDL (152 aa). A helical transmembrane segment spans residues 57–77; the sequence is FVLASFALALLLPVFLAVTAV.

It belongs to the camello family.

It is found in the membrane. In terms of biological role, probable acetyltransferase. Functionally, may act as a transcription factor regulating the expression of coproporphyrinogen oxidase by binding to a promoter regulatory element. The polypeptide is Probable N-acetyltransferase 14 (NAT14) (Macaca fascicularis (Crab-eating macaque)).